Reading from the N-terminus, the 482-residue chain is UDP-glycosyltransferase 86A2 (482 aa).

UDP-alpha-D-glucose contacts are provided by residues Ser297, 355-357 (CCQ), 372-380 (HCGWNSILE), and 394-397 (LTDQ).

This sequence belongs to the UDP-glycosyltransferase family.

This chain is UDP-glycosyltransferase 86A2 (UGT86A2), found in Arabidopsis thaliana (Mouse-ear cress).